The primary structure comprises 83 residues: Putative regulatory protein FMG_0656 (83 aa).

This sequence belongs to the RemA family.

The protein is Putative regulatory protein FMG_0656 of Finegoldia magna (strain ATCC 29328 / DSM 20472 / WAL 2508) (Peptostreptococcus magnus).